The chain runs to 171 residues: Phosphopantetheine adenylyltransferase (171 aa).

Threonine 9 contributes to the substrate binding site. ATP contacts are provided by residues 9-10 (TF) and histidine 17. Substrate is bound by residues lysine 41, leucine 73, and arginine 87. ATP is bound by residues 88–90 (GLR), glutamate 98, and 123–129 (YQFISGT).

The protein belongs to the bacterial CoaD family. As to quaternary structure, homohexamer. Mg(2+) is required as a cofactor.

The protein resides in the cytoplasm. The enzyme catalyses (R)-4'-phosphopantetheine + ATP + H(+) = 3'-dephospho-CoA + diphosphate. The protein operates within cofactor biosynthesis; coenzyme A biosynthesis; CoA from (R)-pantothenate: step 4/5. Its function is as follows. Reversibly transfers an adenylyl group from ATP to 4'-phosphopantetheine, yielding dephospho-CoA (dPCoA) and pyrophosphate. The protein is Phosphopantetheine adenylyltransferase of Paraburkholderia xenovorans (strain LB400).